Reading from the N-terminus, the 245-residue chain is Brasilane terpene glycosides biosynthesis cluster protein D (245 aa).

2 C3H1-type zinc fingers span residues 121–152 (KELK…HDNV) and 161–185 (ICHF…HYPA). The tract at residues 186–245 (PHRVTAPMPSKKKSKKLRSSVADDASHPDLGKARRHDPRDDEQNDEVWRNQGRARPGQEW) is disordered. The segment covering 209–226 (DASHPDLGKARRHDPRDD) has biased composition (basic and acidic residues).

Its function is as follows. Part of the gene cluster that mediates the biosynthesis of the brasilane terpene glycosides brasilane D and E. The biosynthesis starts with the activity of the terpene cyclase braA that converts farnesyl pyrophosphate into the sesquiterpene alcohol trichobrasilenol. Subsequently, trichobrasilenol is glycosylated by the O-glycosyltransferase braB putatively using UDP-GlcNAc as sugar donor to yield brasilane A. The latter then undergoes two rounds of oxidation performed by the cytochrome P450 monooxygenase braC. In the first round braC hydroxylates C-12 forming brasilane D, which serves as substrate in the second round to establish the epoxide at the bond between C-5 and C-10 and oxidize the alcohol at C-12 to an aldehyde leading to the final product brasilane E. This is Brasilane terpene glycosides biosynthesis cluster protein D from Annulohypoxylon truncatum (Hypoxylon truncatum).